A 238-amino-acid chain; its full sequence is tRNA (guanine-N(7)-)-methyltransferase (238 aa).

S-adenosyl-L-methionine is bound by residues E68, E93, D120, and D143. The active site involves D143. Residues K147, D179, and 216 to 219 each bind substrate; that span reads TKFE.

Belongs to the class I-like SAM-binding methyltransferase superfamily. TrmB family.

The catalysed reaction is guanosine(46) in tRNA + S-adenosyl-L-methionine = N(7)-methylguanosine(46) in tRNA + S-adenosyl-L-homocysteine. The protein operates within tRNA modification; N(7)-methylguanine-tRNA biosynthesis. Catalyzes the formation of N(7)-methylguanine at position 46 (m7G46) in tRNA. The polypeptide is tRNA (guanine-N(7)-)-methyltransferase (Shewanella denitrificans (strain OS217 / ATCC BAA-1090 / DSM 15013)).